Reading from the N-terminus, the 476-residue chain is tRNA(Ile)-lysidine synthase (476 aa).

26 to 31 (SGGSDS) lines the ATP pocket.

The protein belongs to the tRNA(Ile)-lysidine synthase family.

Its subcellular location is the cytoplasm. The enzyme catalyses cytidine(34) in tRNA(Ile2) + L-lysine + ATP = lysidine(34) in tRNA(Ile2) + AMP + diphosphate + H(+). Ligates lysine onto the cytidine present at position 34 of the AUA codon-specific tRNA(Ile) that contains the anticodon CAU, in an ATP-dependent manner. Cytidine is converted to lysidine, thus changing the amino acid specificity of the tRNA from methionine to isoleucine. This is tRNA(Ile)-lysidine synthase from Bartonella quintana (strain Toulouse) (Rochalimaea quintana).